The sequence spans 212 residues: Cytidylate kinase (212 aa).

Residue 11–19 (GPAASGKGT) participates in ATP binding. The interval 50-69 (GGDPADPAASEEQARSLSRL) is disordered.

This sequence belongs to the cytidylate kinase family. Type 1 subfamily.

It localises to the cytoplasm. The enzyme catalyses CMP + ATP = CDP + ADP. It catalyses the reaction dCMP + ATP = dCDP + ADP. This chain is Cytidylate kinase, found in Acidiphilium cryptum (strain JF-5).